The following is a 359-amino-acid chain: Cysteine/Cysteine sulfinic acid decarboxylase (359 aa).

The protein in the N-terminal section; belongs to the HFCD (homo-oligomeric flavin containing Cys decarboxylase) superfamily. In the C-terminal section; belongs to the PPC synthetase family.

It carries out the reaction L-cysteine + H(+) = cysteamine + CO2. The enzyme catalyses 3-sulfino-L-alanine + H(+) = hypotaurine + CO2. Slightly stimulated in the presence of 1 mM Mg(2+). Its function is as follows. Catalyzes the decarboxylation of L-cysteine to cysteamine and of 3-sulfino-L-alanine (cysteine sulfinic acid) to hypotaurine. Also catalyzes the decarboxylation of various amino acids such as L-lysine, L-glutamate, L-asparaginate and L-proline. In vitro, shows highest activity with L-cysteine as substrate. The sequence is that of Cysteine/Cysteine sulfinic acid decarboxylase from Unknown prokaryotic organism.